A 303-amino-acid polypeptide reads, in one-letter code: Ubiquinone biosynthesis protein COQ4, mitochondrial (303 aa).

Histidine 191, aspartate 192, histidine 195, and glutamate 207 together coordinate Zn(2+).

It belongs to the COQ4 family. Component of a multi-subunit COQ enzyme complex, composed of at least COQ3, COQ4, COQ5, COQ6, COQ7 and COQ9. Requires Zn(2+) as cofactor.

Its subcellular location is the mitochondrion inner membrane. It catalyses the reaction a 4-hydroxy-3-methoxy-5-(all-trans-polyprenyl)benzoate + H(+) = a 2-methoxy-6-(all-trans-polyprenyl)phenol + CO2. Its pathway is cofactor biosynthesis; ubiquinone biosynthesis. Its function is as follows. Lyase that catalyzes the C1-decarboxylation of 4-hydroxy-3-methoxy-5-(all-trans-polyprenyl)benzoic acid into 2-methoxy-6-(all-trans-polyprenyl)phenol during ubiquinone biosynthesis. The polypeptide is Ubiquinone biosynthesis protein COQ4, mitochondrial (Komagataella phaffii (strain GS115 / ATCC 20864) (Yeast)).